The sequence spans 192 residues: UPF0312 protein YE1254 (192 aa).

The N-terminal stretch at 1–23 (MFNKTLLGLTVGALMFTAGSAVA) is a signal peptide.

Belongs to the UPF0312 family. Type 1 subfamily.

The protein resides in the periplasm. In Yersinia enterocolitica serotype O:8 / biotype 1B (strain NCTC 13174 / 8081), this protein is UPF0312 protein YE1254.